The following is a 240-amino-acid chain: RNA transcription, translation and transport factor protein (240 aa).

This sequence belongs to the RTRAF family. As to quaternary structure, homodimer. Component of a tRNA-splicing ligase complex.

Its subcellular location is the nucleus. The protein resides in the cytoplasm. The protein localises to the cytosol. It localises to the perinuclear region. It is found in the cytoskeleton. Its subcellular location is the microtubule organizing center. The protein resides in the centrosome. RNA-binding protein involved in modulation of mRNA transcription by Polymerase II. Component of the tRNA-splicing ligase complex. This is RNA transcription, translation and transport factor protein from Xenopus laevis (African clawed frog).